The primary structure comprises 1070 residues: DNA-directed RNA polymerase subunit beta (1070 aa).

Belongs to the RNA polymerase beta chain family. As to quaternary structure, in plastids the minimal PEP RNA polymerase catalytic core is composed of four subunits: alpha, beta, beta', and beta''. When a (nuclear-encoded) sigma factor is associated with the core the holoenzyme is formed, which can initiate transcription.

The protein resides in the plastid. It localises to the chloroplast. It catalyses the reaction RNA(n) + a ribonucleoside 5'-triphosphate = RNA(n+1) + diphosphate. Its function is as follows. DNA-dependent RNA polymerase catalyzes the transcription of DNA into RNA using the four ribonucleoside triphosphates as substrates. The sequence is that of DNA-directed RNA polymerase subunit beta from Citrus sinensis (Sweet orange).